A 247-amino-acid chain; its full sequence is Uridylate kinase (247 aa).

ATP is bound at residue 14-17; that stretch reads KLSG. An involved in allosteric activation by GTP region spans residues 22–27; the sequence is GERGVG. Glycine 56 contributes to the UMP binding site. Residues glycine 57 and arginine 61 each coordinate ATP. Residues aspartate 76 and 137–144 each bind UMP; that span reads IGSPYFST. Positions 165, 171, and 174 each coordinate ATP.

It belongs to the UMP kinase family. Homohexamer.

It localises to the cytoplasm. The catalysed reaction is UMP + ATP = UDP + ADP. The protein operates within pyrimidine metabolism; CTP biosynthesis via de novo pathway; UDP from UMP (UMPK route): step 1/1. Its activity is regulated as follows. Allosterically activated by GTP. Inhibited by UTP. Its function is as follows. Catalyzes the reversible phosphorylation of UMP to UDP. The sequence is that of Uridylate kinase from Streptococcus pneumoniae (strain ATCC BAA-255 / R6).